A 163-amino-acid polypeptide reads, in one-letter code: Globin CTT-Z (163 aa).

The N-terminal stretch at 1–16 (MKFFAVLALCIVGAIA) is a signal peptide. The Globin domain occupies 18-162 (PLTSDEAALV…VYTAVFQIVT (145 aa)). Heme b is bound by residues histidine 76 and histidine 111.

Belongs to the globin family.

The polypeptide is Globin CTT-Z (CTT-Z) (Chironomus thummi piger (Midge)).